The following is a 417-amino-acid chain: Phosphoglycerate kinase 1 (417 aa).

S2 is subject to N-acetylserine. Phosphoserine occurs at positions 2 and 4. Position 6 is an N6-succinyllysine (K6). An N6-acetyllysine modification is found at K11. Residues V23, D24, F25, N26, Q38, R39, S62, H63, G65, and R66 each coordinate (2R)-3-phosphoglycerate. Residues 38–43 (QRIKAA) form a mitochondrial targeting region exposed following cis-trans isomerization by PIN1 and recognized by the TOM complex for mitochondrial translocation of the protein region. Position 75 is an N6-acetyllysine (K75). Y76 is subject to Phosphotyrosine. N6-acetyllysine is present on residues K86 and K91. At K97 the chain carries N6-(2-hydroxyisobutyryl)lysine; alternate. K97 is subject to N6-acetyllysine; alternate. Residues L122 and R123 each contribute to the (2R)-3-phosphoglycerate site. An N6-acetyllysine; alternate modification is found at K131. K131 is subject to N6-malonyllysine; alternate. K146 carries the post-translational modification N6-acetyllysine. Residues H170 and R171 each coordinate (2R)-3-phosphoglycerate. K191 bears the N6-succinyllysine mark. Y196 carries the phosphotyrosine modification. K199 carries the post-translational modification N6-acetyllysine. S203 bears the Phosphoserine mark. Residue G214 coordinates ADP. Residue G214 coordinates CDP. Residues A215 and K216 each contribute to the AMP site. A215 provides a ligand contact to ATP. A215 contributes to the Mg(2+) binding site. N6-(2-hydroxyisobutyryl)lysine is present on K216. Mg(2+) contacts are provided by A218 and D219. D219 contacts CDP. K220 serves as a coordination point for AMP. K220 serves as a coordination point for ATP. Position 220 is an N6-(2-hydroxyisobutyryl)lysine (K220). G238 provides a ligand contact to ADP. G238 provides a ligand contact to CDP. An AMP-binding site is contributed by G239. G239 is an ATP binding site. N6-acetyllysine is present on residues K267 and K291. G313 lines the AMP pocket. ATP is bound at residue G313. K323 is subject to N6-(2-hydroxyisobutyryl)lysine. 3 residues coordinate CDP: G338, V340, and F343. F343 provides a ligand contact to ADP. E344 provides a ligand contact to AMP. 3 residues coordinate ATP: E344, D375, and T376. D375 is a binding site for Mg(2+).

This sequence belongs to the phosphoglycerate kinase family. Monomer. Interacts with kinase MAPK1/ERK2; the interaction is direct, occurs under hypoxic conditions, and promotes its interaction with PIN1. Interacts with peptidyl-prolyl cis-trans isomerase PIN1; the interaction is direct, occurs under hypoxic conditions, and targets the protein to the mitochondrion by promoting interactions with the TOM complex. Interacts with mitochondrial circRNA mcPGK1 (via its 2nd stem-loop); the interaction is direct and targets the protein to the mitochondrion by promoting interactions with the TOM complex. Interacts with pyruvate dehydrogenase kinase PDK1; the interaction is direct, occurs under hypoxic conditions and leads to PDK1-mediated inhibition of pyruvate dehydrogenase complex activity. It depends on Mg(2+) as a cofactor. Post-translationally, phosphorylated at Ser-203 by MAPK1/ERK2 under hypoxic conditions, which promotes its mitochondrial targeting.

The protein resides in the cytoplasm. It localises to the cytosol. It is found in the mitochondrion matrix. It catalyses the reaction (2R)-3-phosphoglycerate + ATP = (2R)-3-phospho-glyceroyl phosphate + ADP. The catalysed reaction is L-seryl-[protein] + ATP = O-phospho-L-seryl-[protein] + ADP + H(+). It participates in carbohydrate degradation; glycolysis; pyruvate from D-glyceraldehyde 3-phosphate: step 2/5. Its function is as follows. Catalyzes one of the two ATP producing reactions in the glycolytic pathway via the reversible conversion of 1,3-diphosphoglycerate to 3-phosphoglycerate. Both L- and D- forms of purine and pyrimidine nucleotides can be used as substrates, but the activity is much lower on pyrimidines. In addition to its role as a glycolytic enzyme, it seems that PGK-1 acts as a polymerase alpha cofactor protein (primer recognition protein). Acts as a protein kinase when localized to the mitochondrion where it phosphorylates pyruvate dehydrogenase kinase PDK1 to inhibit pyruvate dehydrogenase complex activity and suppress the formation of acetyl-coenzyme A from pyruvate, and consequently inhibit oxidative phosphorylation and promote glycolysis. May play a role in sperm motility. The sequence is that of Phosphoglycerate kinase 1 (PGK1) from Notamacropus eugenii (Tammar wallaby).